Reading from the N-terminus, the 479-residue chain is Aspartyl/glutamyl-tRNA(Asn/Gln) amidotransferase subunit B (479 aa).

This sequence belongs to the GatB/GatE family. GatB subfamily. As to quaternary structure, heterotrimer of A, B and C subunits.

The enzyme catalyses L-glutamyl-tRNA(Gln) + L-glutamine + ATP + H2O = L-glutaminyl-tRNA(Gln) + L-glutamate + ADP + phosphate + H(+). It catalyses the reaction L-aspartyl-tRNA(Asn) + L-glutamine + ATP + H2O = L-asparaginyl-tRNA(Asn) + L-glutamate + ADP + phosphate + 2 H(+). Allows the formation of correctly charged Asn-tRNA(Asn) or Gln-tRNA(Gln) through the transamidation of misacylated Asp-tRNA(Asn) or Glu-tRNA(Gln) in organisms which lack either or both of asparaginyl-tRNA or glutaminyl-tRNA synthetases. The reaction takes place in the presence of glutamine and ATP through an activated phospho-Asp-tRNA(Asn) or phospho-Glu-tRNA(Gln). The chain is Aspartyl/glutamyl-tRNA(Asn/Gln) amidotransferase subunit B from Deinococcus radiodurans (strain ATCC 13939 / DSM 20539 / JCM 16871 / CCUG 27074 / LMG 4051 / NBRC 15346 / NCIMB 9279 / VKM B-1422 / R1).